Reading from the N-terminus, the 467-residue chain is Putative serine/threonine-protein kinase R400 (467 aa).

One can recognise a Protein kinase domain in the interval 99–467; it reads GVKLIYIKSG…STGQKPTKKV (369 aa). ATP contacts are provided by residues 105-113 and Lys-129; that span reads IKSGTTGHT. Asp-272 acts as the Proton acceptor in catalysis. Residues 443-467 form a disordered region; the sequence is LFQQGNGSKQPVPKKSTGQKPTKKV. Residues 458 to 467 show a composition bias toward polar residues; that stretch reads STGQKPTKKV.

It belongs to the protein kinase superfamily. Ser/Thr protein kinase family.

The protein resides in the virion. It carries out the reaction L-seryl-[protein] + ATP = O-phospho-L-seryl-[protein] + ADP + H(+). The enzyme catalyses L-threonyl-[protein] + ATP = O-phospho-L-threonyl-[protein] + ADP + H(+). This chain is Putative serine/threonine-protein kinase R400, found in Acanthamoeba polyphaga mimivirus (APMV).